The primary structure comprises 1441 residues: Protein clueless (1441 aa).

Disordered stretches follow at residues 1-79 (MALD…EAAT) and 106-131 (VAAN…ELES). Positions 8-22 (KNSSSAATGDANTVK) are enriched in polar residues. Over residues 54 to 63 (AKKKGKKNRN) the composition is skewed to basic residues. Composition is skewed to low complexity over residues 64–79 (KSPP…EAAT) and 106–126 (VAAN…AASS). Ser273 is modified (phosphoserine). The 243-residue stretch at 427–669 (RAEDAFSSKL…RTFPPDVNFL (243 aa)) folds into the Clu domain. Over residues 726-753 (KKQDEAKEGTKEPASETEKESPPKAITE) the composition is skewed to basic and acidic residues. Disordered stretches follow at residues 726–769 (KKQD…GETK) and 961–1009 (EIHK…SGGT). A compositionally biased stretch (basic residues) spans 964-977 (KKRTNTKYNKHKSS). A compositionally biased stretch (low complexity) spans 978–1009 (KSSGSGSKQSGQTSNQNGTSTSPSSSTASGGT). TPR repeat units lie at residues 1109–1142 (AYNF…LNNV), 1235–1268 (ALID…NLKY), and 1270–1303 (GAKA…EKET).

Belongs to the CLU family.

The protein localises to the cytoplasm. Its function is as follows. mRNA-binding protein involved in proper cytoplasmic distribution of mitochondria. This Drosophila willistoni (Fruit fly) protein is Protein clueless.